We begin with the raw amino-acid sequence, 516 residues long: Maintenance of mitochondrial morphology protein 1 (516 aa).

Residues Met-1–Gly-43 lie on the Lumenal side of the membrane. Residues Leu-44 to Phe-64 form a helical membrane-spanning segment. Over Gly-65–Thr-516 the chain is Cytoplasmic. 4 disordered regions span residues Pro-70 to Thr-118, Thr-295 to Gly-349, Arg-420 to Gly-466, and Gly-485 to Thr-516. 3 stretches are compositionally biased toward polar residues: residues Gly-74–Ser-96, Ser-105–Thr-118, and Thr-295–Glu-312. The SMP-LTD domain maps to Gln-151–Pro-412. The span at Gly-449–Met-460 shows a compositional bias: gly residues.

The protein belongs to the MMM1 family. Homodimer. Component of the ER-mitochondria encounter structure (ERMES) or MDM complex, composed of MMM1, MDM10, MDM12 and MDM34. An MMM1 homodimer associates with one molecule of MDM12 on each side in a pairwise head-to-tail manner, and the SMP-LTD domains of MMM1 and MDM12 generate a continuous hydrophobic tunnel for phospholipid trafficking.

The protein resides in the endoplasmic reticulum membrane. Component of the ERMES/MDM complex, which serves as a molecular tether to connect the endoplasmic reticulum (ER) and mitochondria. Components of this complex are involved in the control of mitochondrial shape and protein biogenesis, and function in nonvesicular lipid trafficking between the ER and mitochondria. The MDM12-MMM1 subcomplex functions in the major beta-barrel assembly pathway that is responsible for biogenesis of all outer membrane beta-barrel proteins, and acts in a late step after the SAM complex. The MDM10-MDM12-MMM1 subcomplex further acts in the TOM40-specific pathway after the action of the MDM12-MMM1 complex. Essential for establishing and maintaining the structure of mitochondria and maintenance of mtDNA nucleoids. The chain is Maintenance of mitochondrial morphology protein 1 from Paracoccidioides brasiliensis (strain Pb18).